We begin with the raw amino-acid sequence, 391 residues long: GATA-binding factor 6-B (391 aa).

The span at 57 to 69 shows a compositional bias: polar residues; the sequence is GTHSVNSHWSQAT. The interval 57–107 is disordered; it reads GTHSVNSHWSQATSESSSYSSSSPHPSSRYHYSPSPPMANGSTRDTGYSSS. A compositionally biased stretch (low complexity) spans 70–89; sequence SESSSYSSSSPHPSSRYHYS. The span at 96–107 shows a compositional bias: polar residues; it reads NGSTRDTGYSSS. 2 consecutive GATA-type zinc fingers follow at residues 182 to 206 and 236 to 260; these read CVNCGSVQTPLWRRDGTGHYLCNAC and CANCHTTTTTLWRRNTEGEPVCNAC. The tract at residues 277–334 is disordered; sequence KEGIQTRKRKPKNLNKSKSSSSNGNSSHHITMTPTSTTSSTNSDDCIKNGSPSQNTAP. Residues 282 to 291 show a composition bias toward basic residues; that stretch reads TRKRKPKNLN. Low complexity predominate over residues 292–319; the sequence is KSKSSSSNGNSSHHITMTPTSTTSSTNS.

As to expression, in embryos, expressed in the presumptive heart mesoderm. In adults, widely distributed but predominant in the heart.

Its subcellular location is the nucleus. In terms of biological role, transcriptional activator that binds 5'-GATA-3'-containing motifs within gene promoters. Regulates cardiac-specific transcription during embryogenesis and thereby cardiogenesis. The chain is GATA-binding factor 6-B (gata6-b) from Xenopus laevis (African clawed frog).